Reading from the N-terminus, the 335-residue chain is Histidinol-phosphate aminotransferase (335 aa).

At lysine 202 the chain carries N6-(pyridoxal phosphate)lysine.

The protein belongs to the class-II pyridoxal-phosphate-dependent aminotransferase family. Histidinol-phosphate aminotransferase subfamily. In terms of assembly, homodimer. Pyridoxal 5'-phosphate serves as cofactor.

It catalyses the reaction L-histidinol phosphate + 2-oxoglutarate = 3-(imidazol-4-yl)-2-oxopropyl phosphate + L-glutamate. The protein operates within amino-acid biosynthesis; L-histidine biosynthesis; L-histidine from 5-phospho-alpha-D-ribose 1-diphosphate: step 7/9. The chain is Histidinol-phosphate aminotransferase from Thermotoga maritima (strain ATCC 43589 / DSM 3109 / JCM 10099 / NBRC 100826 / MSB8).